Consider the following 215-residue polypeptide: Pyridoxine/pyridoxamine 5'-phosphate oxidase (215 aa).

Residues R9–Y12 and K69 each bind substrate. FMN is bound by residues R64–K69, F79–T80, K86, and Q108. Residues Y126, R130, and S134 each coordinate substrate. FMN-binding positions include Q143–S144 and W188. R194 to H196 is a substrate binding site. Residue R198 participates in FMN binding.

This sequence belongs to the pyridoxamine 5'-phosphate oxidase family. In terms of assembly, homodimer. FMN serves as cofactor.

The catalysed reaction is pyridoxamine 5'-phosphate + O2 + H2O = pyridoxal 5'-phosphate + H2O2 + NH4(+). The enzyme catalyses pyridoxine 5'-phosphate + O2 = pyridoxal 5'-phosphate + H2O2. Its pathway is cofactor metabolism; pyridoxal 5'-phosphate salvage; pyridoxal 5'-phosphate from pyridoxamine 5'-phosphate: step 1/1. The protein operates within cofactor metabolism; pyridoxal 5'-phosphate salvage; pyridoxal 5'-phosphate from pyridoxine 5'-phosphate: step 1/1. Its function is as follows. Catalyzes the oxidation of either pyridoxine 5'-phosphate (PNP) or pyridoxamine 5'-phosphate (PMP) into pyridoxal 5'-phosphate (PLP). The polypeptide is Pyridoxine/pyridoxamine 5'-phosphate oxidase (Pseudomonas syringae pv. tomato (strain ATCC BAA-871 / DC3000)).